The chain runs to 41 residues: Fibrinogen beta chain (41 aa).

Residues 1–41 are disordered; sequence ADDYDDEVLPDARGHRPIDRKREELPSLRPAPPPISGGGYR. Tyrosine 4 carries the post-translational modification Sulfotyrosine. Basic and acidic residues predominate over residues 10 to 26; sequence PDARGHRPIDRKREELP. Positions 14-16 are beta-chain polymerization, binding distal domain of another fibrin; sequence GHR.

Heterohexamer; disulfide linked. Contains 2 sets of 3 non-identical chains (alpha, beta and gamma). The 2 heterotrimers are in head to head conformation with the N-termini in a small central domain. Conversion of fibrinogen to fibrin is triggered by thrombin, which cleaves fibrinopeptides A and B from alpha and beta chains, and thus exposes the N-terminal polymerization sites responsible for the formation of the soft clot.

It is found in the secreted. In terms of biological role, cleaved by the protease thrombin to yield monomers which, together with fibrinogen alpha (FGA) and fibrinogen gamma (FGG), polymerize to form an insoluble fibrin matrix. Fibrin has a major function in hemostasis as one of the primary components of blood clots. In addition, functions during the early stages of wound repair to stabilize the lesion and guide cell migration during re-epithelialization. Was originally thought to be essential for platelet aggregation, based on in vitro studies using anticoagulated blood. However subsequent studies have shown that it is not absolutely required for thrombus formation in vivo. Enhances expression of SELP in activated platelets. Maternal fibrinogen is essential for successful pregnancy. Fibrin deposition is also associated with infection, where it protects against IFNG-mediated hemorrhage. May also facilitate the antibacterial immune response via both innate and T-cell mediated pathways. In Oryctolagus cuniculus (Rabbit), this protein is Fibrinogen beta chain (FGB).